A 369-amino-acid chain; its full sequence is MTLALISTETTEEPSCKASVAAPAPKGGAQIGVKAARRPSELLQRDGAHDVAVAIPDDFELDFGGTLTQKRVIGRLHGKANAPLIVVAGGISADRYVHRTETKGLGWWSGAVGVRAPIDLTRFRVLAFDFAPEFGEDVKDAKTPLTITTQDQARLLALLLDHLGVEKVAAFIGCSYGGMIALAFGELFPDWAEQLVVVSAAHRPHPLATAWRGIQRRILQLGLETGRIDQAVGLARELAMTTYRTQEEFGDRFDSEAPSHAGQAYPVCDYLQARGRAYRDRTTPSRWLSLSDSIDRHRVEPEAITAPVTLIGFTTDRLCPIEDMRELADRLPNLWRFEQHASVYGHDAFLKEDKLVADILTSVLKDIDQ.

Residues 90–93 (GISA) are important for substrate specificity. Residues 107–353 (WWSGAVGVRA…YGHDAFLKED (247 aa)) enclose the AB hydrolase-1 domain. Residue Ser-175 is the Nucleophile of the active site. Substrate is bound at residue Arg-236. Residues Asp-316 and His-346 contribute to the active site. Asp-347 is a substrate binding site.

Belongs to the AB hydrolase superfamily. MetX family. In terms of assembly, homodimer.

It localises to the cytoplasm. The enzyme catalyses L-homoserine + succinyl-CoA = O-succinyl-L-homoserine + CoA. It functions in the pathway amino-acid biosynthesis; L-methionine biosynthesis via de novo pathway; O-succinyl-L-homoserine from L-homoserine: step 1/1. Its function is as follows. Transfers a succinyl group from succinyl-CoA to L-homoserine, forming succinyl-L-homoserine. The sequence is that of Homoserine O-succinyltransferase from Brevundimonas diminuta (strain ATCC 11568 / DSM 7234 / NBRC 12697 / NCIMB 9393 / NCTC 8545).